The chain runs to 424 residues: Histidine--tRNA ligase (424 aa).

It belongs to the class-II aminoacyl-tRNA synthetase family. Homodimer.

The protein resides in the cytoplasm. It carries out the reaction tRNA(His) + L-histidine + ATP = L-histidyl-tRNA(His) + AMP + diphosphate + H(+). This Staphylococcus epidermidis (strain ATCC 12228 / FDA PCI 1200) protein is Histidine--tRNA ligase.